Reading from the N-terminus, the 528-residue chain is Putative ABC transporter ATP-binding protein MA_1418 (528 aa).

ABC transporter domains follow at residues 2–242 (IELR…TNLT) and 262–494 (ISVK…SDYK). Residues 36–43 (GHSAAGKT) and 294–301 (GENGSGKT) contribute to the ATP site.

Belongs to the ABC transporter superfamily.

Its subcellular location is the cell membrane. Its function is as follows. Probably part of an ABC transporter complex. Responsible for energy coupling to the transport system. The chain is Putative ABC transporter ATP-binding protein MA_1418 from Methanosarcina acetivorans (strain ATCC 35395 / DSM 2834 / JCM 12185 / C2A).